A 291-amino-acid chain; its full sequence is Protease HtpX homolog (291 aa).

Transmembrane regions (helical) follow at residues 11–31 (INTFLILFVFILACGGFGLLA) and 34–54 (FLGMSFFLFILLLAAGYACVQ). A Zn(2+)-binding site is contributed by histidine 140. The active site involves glutamate 141. Histidine 144 lines the Zn(2+) pocket. 2 helical membrane-spanning segments follow: residues 155 to 175 (IVFGLVSAVGLISDMVLRALI) and 186 to 206 (AFSFVIVLFFSLLAPIAAMLV). Glutamate 215 serves as a coordination point for Zn(2+).

The protein belongs to the peptidase M48B family. The cofactor is Zn(2+).

It localises to the cell membrane. The polypeptide is Protease HtpX homolog (Tropheryma whipplei (strain Twist) (Whipple's bacillus)).